Here is a 74-residue protein sequence, read N- to C-terminus: Omwaprin-b (74 aa).

An N-terminal signal peptide occupies residues 1–24; the sequence is MSSGGLLLLLGLLTLWEVLTPVSS. The WAP domain maps to 27-71; it reads RPKKPGLCPPRPQKPCVKECKNDWSCPGQQKCCNYGCIDECRDPI. Disulfide bonds link Cys-34-Cys-59, Cys-42-Cys-63, Cys-46-Cys-58, and Cys-52-Cys-67.

The protein belongs to the venom waprin family. As to expression, expressed by the venom gland.

It is found in the secreted. In terms of biological role, damages membranes of susceptible bacteria. Has antibacterial activity against the Gram-positive bacteria B.megaterium and S.warneri. After 45 minutes of treatment with this protein, B.megaterium have no visible pili and are smooth. Has no antibacterial activity against the Gram-positive bacteria B.thuringiensis, S.aureus, S.clavuligerus and B. anthracis, or the Gram-negative bacteria E.coli and A.tumefaciens. Has no hemolytic activity. Does not inhibit the proteinases elastase and cathepsin G. Is not toxic to mice. In Oxyuranus microlepidotus (Inland taipan), this protein is Omwaprin-b.